A 462-amino-acid chain; its full sequence is NAD-capped RNA hydrolase NUDT12 (462 aa).

ANK repeat units follow at residues 11 to 40 (EIVT…SLLN), 45 to 74 (NGWT…DRSI), and 78 to 98 (SRQT…ANLL). Lysine 185 is subject to N6-succinyllysine. Zn(2+) is bound by residues cysteine 284 and cysteine 287. Lysine 292 carries the post-translational modification N6-succinyllysine. Zn(2+) contacts are provided by cysteine 302 and cysteine 307. Substrate-binding positions include tyrosine 318, 354–356 (AGF), glutamate 370, glutamate 374, and glutamate 415. Residues 319 to 453 (PRVDPVVIMQ…SRAIAHQLIK (135 aa)) form the Nudix hydrolase domain. Mg(2+) contacts are provided by alanine 354, glutamate 370, glutamate 374, and glutamate 415. The short motif at 355–376 (GFIEPGETIEDAVRREVEEESG) is the Nudix box element. The short motif at 460 to 462 (PNL) is the Microbody targeting signal element.

This sequence belongs to the Nudix hydrolase family. NudC subfamily. As to quaternary structure, homodimer. Homodimerization is essential for its catalytic activity and protein stability. Interacts (via ANK repeats) with BLMH. Mg(2+) serves as cofactor. It depends on Zn(2+) as a cofactor.

It is found in the cytoplasm. The protein localises to the peroxisome. Its subcellular location is the cytoplasmic granule. It carries out the reaction a 5'-end NAD(+)-phospho-ribonucleoside in mRNA + H2O = a 5'-end phospho-adenosine-phospho-ribonucleoside in mRNA + beta-nicotinamide D-ribonucleotide + 2 H(+). The enzyme catalyses NAD(+) + H2O = beta-nicotinamide D-ribonucleotide + AMP + 2 H(+). The catalysed reaction is NADH + H2O = reduced beta-nicotinamide D-ribonucleotide + AMP + 2 H(+). It catalyses the reaction NADPH + H2O = reduced beta-nicotinamide D-ribonucleotide + adenosine 2',5'-bisphosphate + 2 H(+). Its function is as follows. mRNA decapping enzyme that specifically removes the nicotinamide adenine dinucleotide (NAD) cap from a subset of mRNAs by hydrolyzing the diphosphate linkage to produce nicotinamide mononucleotide (NMN) and 5' monophosphate mRNA. The NAD-cap is present at the 5'-end of some RNAs; in contrast to the canonical N7 methylguanosine (m7G) cap, the NAD cap promotes mRNA decay. Preferentially acts on NAD-capped transcripts in response to nutrient stress. Also acts on free nicotinamide adenine dinucleotide molecules: hydrolyzes NAD(H) into NMN(H) and AMP, and NADPH into NMNH and 2',5'-ADP. May act to regulate the concentration of peroxisomal nicotinamide nucleotide cofactors required for oxidative metabolism in this organelle. Regulates the levels of circadian clock components PER1, PER2, PER3 and CRY2 in the liver. The chain is NAD-capped RNA hydrolase NUDT12 from Homo sapiens (Human).